The following is a 527-amino-acid chain: Catalase (527 aa).

The span at 1–22 shows a compositional bias: basic and acidic residues; that stretch reads MADSRDPASDQMKQWKEQRAPQ. The interval 1–34 is disordered; sequence MADSRDPASDQMKQWKEQRAPQKPDVLTTGGGNP. An N-acetylalanine modification is found at Ala-2. A Phosphoserine modification is found at Ser-9. Lys-13 carries the post-translational modification N6-succinyllysine. Active-site residues include His-75 and Asn-148. 4 residues coordinate NADP(+): His-194, Ser-201, Arg-203, and Asn-213. Lys-221 carries the post-translational modification N6-succinyllysine. The residue at position 233 (Lys-233) is an N6-acetyllysine. Residues Lys-237, Trp-303, His-305, and Lys-306 each contribute to the NADP(+) site. Lys-306 is modified (N6-acetyllysine; alternate). N6-succinyllysine; alternate is present on Lys-306. Tyr-358 contacts heme. A phosphoserine mark is found at Ser-417 and Ser-434. N6-acetyllysine; alternate is present on residues Lys-449 and Lys-480. Residues Lys-449 and Lys-480 each carry the N6-succinyllysine; alternate modification. Residue Thr-511 is modified to Phosphothreonine. Ser-517 is subject to Phosphoserine. The residue at position 522 (Lys-522) is an N6-succinyllysine. The short motif at 524–527 is the Microbody targeting signal; atypical element; sequence KANL.

It belongs to the catalase family. As to quaternary structure, homotetramer. Interacts (via microbody targeting signal) with PEX5, monomeric form interacts with PEX5, leading to its translocation into peroxisomes. Heme serves as cofactor. It depends on NADP(+) as a cofactor. Expressed in renal proximal tubules (at protein level).

The protein localises to the peroxisome matrix. It carries out the reaction 2 H2O2 = O2 + 2 H2O. Its function is as follows. Catalyzes the degradation of hydrogen peroxide (H(2)O(2)) generated by peroxisomal oxidases to water and oxygen, thereby protecting cells from the toxic effects of hydrogen peroxide. Promotes growth of cells including T-cells, B-cells, myeloid leukemia cells, melanoma cells, mastocytoma cells and normal and transformed fibroblast cells. In Rattus norvegicus (Rat), this protein is Catalase (Cat).